The following is a 197-amino-acid chain: Phospholipid hydroperoxide glutathione peroxidase GPX4 (197 aa).

Position 40 is a phosphoserine (serine 40). Selenocysteine 73 is an active-site residue. Position 73 (selenocysteine 73) is a non-standard amino acid, selenocysteine.

It belongs to the glutathione peroxidase family. Monomer. Has a tendency to form higher mass oligomers. Interacts with FUNDC1; this interaction promotes GPX4 recruitment into mitochondria through TOM/TIM complex where it is degraded by mitophagy. Widely expressed with the highest levels in testis, heart, cerebrum, ileum, stomach, liver, jejunum and epididymis. Expressed primarily in testis and sperm midpiece (at protein level). Expressed in brain (at protein level). Expressed in heart, liver and kidney (at protein level). Expressed in retina, especially in inner segments of photoreceptor cells (at protein level). As to expression, highly expressed during embryogenesis. Down-regulated between 14.5 dpc and 17.5 dpc. In terms of tissue distribution, highly expressed during embryogenesis. In contrast to isoform Mitochondrial and isoform Nuclear, which are down-regulated between 14.5 dpc and 17.5 dpc, remains constant. Mainly expressed in sperm. Weakly expressed during embryogenesis. Down-regulated between 14.5 dpc and 17.5 dpc.

The protein localises to the mitochondrion. It is found in the cytoplasm. Its subcellular location is the nucleus. It carries out the reaction a hydroperoxy polyunsaturated fatty acid + 2 glutathione = a hydroxy polyunsaturated fatty acid + glutathione disulfide + H2O. The enzyme catalyses 2 glutathione + H2O2 = glutathione disulfide + 2 H2O. It catalyses the reaction tert-butyl hydroperoxide + 2 glutathione = tert-butanol + glutathione disulfide + H2O. The catalysed reaction is cumene hydroperoxide + 2 glutathione = 2-phenylpropan-2-ol + glutathione disulfide + H2O. It carries out the reaction (9S)-hydroperoxy-(10E,12Z)-octadecadienoate + 2 glutathione = (9S)-hydroxy-(10E,12Z)-octadecadienoate + glutathione disulfide + H2O. The enzyme catalyses (13S)-hydroperoxy-(9Z,11E)-octadecadienoate + 2 glutathione = (13S)-hydroxy-(9Z,11E)-octadecadienoate + glutathione disulfide + H2O. It catalyses the reaction (5S)-hydroperoxy-(6E,8Z,11Z,14Z)-eicosatetraenoate + 2 glutathione = (5S)-hydroxy-(6E,8Z,11Z,14Z)-eicosatetraenoate + glutathione disulfide + H2O. The catalysed reaction is (12R)-hydroperoxy-(5Z,8Z,10E,14Z)-eicosatetraenoate + 2 glutathione = (12R)-hydroxy-(5Z,8Z,10E,14Z)-eicosatetraenoate + glutathione disulfide + H2O. It carries out the reaction (12S)-hydroperoxy-(5Z,8Z,10E,14Z)-eicosatetraenoate + 2 glutathione = (12S)-hydroxy-(5Z,8Z,10E,14Z)-eicosatetraenoate + glutathione disulfide + H2O. The enzyme catalyses (15S)-hydroperoxy-(5Z,8Z,11Z,13E)-eicosatetraenoate + 2 glutathione = (15S)-hydroxy-(5Z,8Z,11Z,13E)-eicosatetraenoate + glutathione disulfide + H2O. It catalyses the reaction (5S)-hydroperoxy-(6E,8Z,11Z,14Z,17Z)-eicosapentaenoate + 2 glutathione = (5S)-hydroxy-(6E,8Z,11Z,14Z,17Z)-eicosapentaenoate + glutathione disulfide + H2O. The catalysed reaction is (12S)-hydroperoxy-(5Z,8Z,10E,14Z,17Z)-eicosapentaenoate + 2 glutathione = (12S)-hydroxy-(5Z,8Z,10E,14Z,17Z)-eicosapentaenoate + glutathione disulfide + H2O. It carries out the reaction (15S)-hydroperoxy-(5Z,8Z,11Z,13E,17Z)-eicosapentaenoate + 2 glutathione = (15S)-hydroxy-(5Z,8Z,11Z,13E,17Z)-eicosapentaenoate + glutathione disulfide + H2O. The enzyme catalyses (15S)-hydroperoxy-(11Z,13E)-eicosadienoate + 2 glutathione = (15S)-hydroxy-(11Z,13E)-eicosadienoate + glutathione disulfide + H2O. It catalyses the reaction (17S)-hydroperoxy-(4Z,7Z,10Z,13Z,15E,19Z)-docosahexaenoate + 2 glutathione = (17S)-hydroxy-(4Z,7Z,10Z,13Z,15E,19Z)-docosahexaenoate + glutathione disulfide + H2O. The catalysed reaction is a hydroperoxy-1,2-diacyl-glycero-3-phosphocholine + 2 glutathione = a hydroxy-1,2-diacyl-glycero-3-phosphocholine + glutathione disulfide + H2O. In terms of biological role, essential antioxidant peroxidase that directly reduces phospholipid hydroperoxide even if they are incorporated in membranes and lipoproteins. Can also reduce fatty acid hydroperoxide, cholesterol hydroperoxide and thymine hydroperoxide. Plays a key role in protecting cells from oxidative damage by preventing membrane lipid peroxidation. Required to prevent cells from ferroptosis, a non-apoptotic cell death resulting from an iron-dependent accumulation of lipid reactive oxygen species. The presence of selenocysteine (Sec) versus Cys at the active site is essential for life: it provides resistance to overoxidation and prevents cells against ferroptosis. The presence of Sec at the active site is also essential for the survival of a specific type of parvalbumin-positive interneurons, thereby preventing against fatal epileptic seizures. May be required to protect cells from the toxicity of ingested lipid hydroperoxides. Required for normal sperm development and male fertility. Essential for maturation and survival of photoreceptor cells. Plays a role in a primary T-cell response to viral and parasitic infection by protecting T-cells from ferroptosis and by supporting T-cell expansion. Plays a role of glutathione peroxidase in platelets in the arachidonic acid metabolism. Reduces hydroperoxy ester lipids formed by a 15-lipoxygenase that may play a role as down-regulator of the cellular 15-lipoxygenase pathway. Can also reduce small soluble hydroperoxides such as H2O2 and tert-butyl hydroperoxide. Functionally, specifically able to suppress the production of leukotriene and prostaglandin in response to several stimuli by reducing fatty acid hydroperoxide. Its function is as follows. Specifically required to prevent mitochondrial cell death by mediating reduction of cardiolipin hydroperoxide. Also required for normal sperm development and male fertility. Required for male fertility by stabilizing the condensed chromatin in sperm nuclei. The sequence is that of Phospholipid hydroperoxide glutathione peroxidase GPX4 from Mus musculus (Mouse).